A 334-amino-acid polypeptide reads, in one-letter code: Adenosine deaminase (334 aa).

Positions 12 and 14 each coordinate Zn(2+). Histidine 14, aspartate 16, and glycine 170 together coordinate substrate. Histidine 197 lines the Zn(2+) pocket. The active-site Proton donor is glutamate 200. Aspartate 278 lines the Zn(2+) pocket. Aspartate 279 contacts substrate.

It belongs to the metallo-dependent hydrolases superfamily. Adenosine and AMP deaminases family. Adenosine deaminase subfamily. It depends on Zn(2+) as a cofactor.

The catalysed reaction is adenosine + H2O + H(+) = inosine + NH4(+). It catalyses the reaction 2'-deoxyadenosine + H2O + H(+) = 2'-deoxyinosine + NH4(+). Functionally, catalyzes the hydrolytic deamination of adenosine and 2-deoxyadenosine. This chain is Adenosine deaminase, found in Vibrio cholerae serotype O1 (strain ATCC 39541 / Classical Ogawa 395 / O395).